Consider the following 301-residue polypeptide: Nucleotide-binding protein Noca_2527 (301 aa).

26–33 provides a ligand contact to ATP; it reads GMTGAGRS. Residue 77-80 coordinates GTP; that stretch reads DVRS.

This sequence belongs to the RapZ-like family.

Its function is as follows. Displays ATPase and GTPase activities. The chain is Nucleotide-binding protein Noca_2527 from Nocardioides sp. (strain ATCC BAA-499 / JS614).